We begin with the raw amino-acid sequence, 141 residues long: Putative pre-16S rRNA nuclease (141 aa).

Belongs to the YqgF nuclease family.

Its subcellular location is the cytoplasm. Its function is as follows. Could be a nuclease involved in processing of the 5'-end of pre-16S rRNA. The sequence is that of Putative pre-16S rRNA nuclease from Coxiella burnetii (strain CbuK_Q154) (Coxiella burnetii (strain Q154)).